The sequence spans 378 residues: MAKKLKKNEEITKKFGDERRKALDDALKNIEKDFGKGAVMRLGERAEQKVQVMSSGSLALDIALGAGGYPKGRIIEIYGPESSGKTTVALHAVAQAQKEGGIAAFIDAEHALDPAYAAALGVNIDELLLSQPDSGEQGLEIAGKLIDSGAVDLVVVDSVAALVPRAEIDGDIGDSHVGLQARMMSQAMRKLSASINKTKTIAIFINQLREKVGVMFGNPETTPGGRALKFYASVRLDVRGTTQIKGTGDQKDSSIGKETKIKVVKNKVAPPFKVAEVEIMYGEGISRTGELVKIASDLDIIQKAGAWFSYNGEKIGQGSENAKRYLADHPELFDEIDRKVRVKFGLLEESEEESAMVVASEEIDDLALDLDNGIEIED.

79–86 is a binding site for ATP; the sequence is GPESSGKT.

Belongs to the RecA family.

The protein localises to the cytoplasm. Its function is as follows. Can catalyze the hydrolysis of ATP in the presence of single-stranded DNA, the ATP-dependent uptake of single-stranded DNA by duplex DNA, and the ATP-dependent hybridization of homologous single-stranded DNAs. It interacts with LexA causing its activation and leading to its autocatalytic cleavage. The polypeptide is Protein RecA (Streptococcus pyogenes serotype M28 (strain MGAS6180)).